The chain runs to 1106 residues: Communication mutant protein F (1106 aa).

An N-terminal signal peptide occupies residues 1–28; the sequence is MKIYKKNHFLKILIIFIYLSCNILKVNA. One can recognise a G8 domain in the interval 254–380; sequence TIWPNGVVPS…YHNTWSKLAS (127 aa). N-linked (GlcNAc...) asparagine glycans are attached at residues N267, N306, N512, N536, N677, N715, and N833.

This sequence belongs to the comF family.

It localises to the secreted. The sequence is that of Communication mutant protein F (comF-1) from Dictyostelium discoideum (Social amoeba).